The primary structure comprises 114 residues: Large ribosomal subunit protein bL20 (114 aa).

It belongs to the bacterial ribosomal protein bL20 family.

Its function is as follows. Binds directly to 23S ribosomal RNA and is necessary for the in vitro assembly process of the 50S ribosomal subunit. It is not involved in the protein synthesizing functions of that subunit. The protein is Large ribosomal subunit protein bL20 of Flavobacterium johnsoniae (strain ATCC 17061 / DSM 2064 / JCM 8514 / BCRC 14874 / CCUG 350202 / NBRC 14942 / NCIMB 11054 / UW101) (Cytophaga johnsonae).